We begin with the raw amino-acid sequence, 633 residues long: Micronuclear linker histone polyprotein (633 aa).

2 DNA-binding regions (HMG box) span residues 12-74 (PPKK…LFHY) and 96-164 (PKKP…KKWN). Residues 170 to 633 (AAQKKQTKRK…AYGKKANKKQ (464 aa)) are disordered. Residues 174–190 (KQTKRKNSTSKSRRSSS) are compositionally biased toward basic residues. 2 stretches are compositionally biased toward low complexity: residues 212–224 (SSASQGRSQSSSS) and 253–271 (NSTSNKRNSSSSSKRSSSS). Composition is skewed to basic residues over residues 272–309 (KNKKSSSSKNKKSSSSKGRKSSSSRGRKASSSKNRKSS) and 330–352 (SNKRKASSSRGRKSSSSKGRKSS). Composition is skewed to basic and acidic residues over residues 353 to 374 (KSQERKNSHADTSKQMEDEGQK) and 382 to 401 (AKRDESSKKSRRNSMKEART). The span at 406-416 (NKSASKASKSG) shows a compositional bias: low complexity. Over residues 417–444 (SKSKGKSASKSKGKSSSKGKNSKSRSAS) the composition is skewed to basic residues. Positions 446-469 (PKSNAAQNSNNTHQTADSSENASS) are enriched in polar residues. A compositionally biased stretch (basic and acidic residues) spans 478-491 (RQREQKDMVNEKSN). The span at 496 to 524 (SKGKKNSKSNTRSKSKSKSASKSRKNASK) shows a compositional bias: basic residues. Composition is skewed to basic and acidic residues over residues 540–550 (SRSESKSKSEA) and 559–612 (EVIE…EDSK).

All four histones are processed from the precursor molecule. In terms of processing, phosphorylated in growing and dividing cells but not in nongrowing (starved) cells. Post-translationally, the N-terminus of MIC LH-alpha and MIC LH-delta is blocked.

Its subcellular location is the nucleus. It localises to the chromosome. The protein is Micronuclear linker histone polyprotein (MLH) of Tetrahymena thermophila (strain SB210).